Here is a 575-residue protein sequence, read N- to C-terminus: Dihydroxy-acid dehydratase (575 aa).

Positions 1-25 (MPTTDSARAADIKQPDIKPRSRDVT) are disordered. A compositionally biased stretch (basic and acidic residues) spans 8 to 25 (RAADIKQPDIKPRSRDVT). Cysteine 64 contacts [2Fe-2S] cluster. Aspartate 96 provides a ligand contact to Mg(2+). Cysteine 137 serves as a coordination point for [2Fe-2S] cluster. Aspartate 138 and lysine 139 together coordinate Mg(2+). Lysine 139 carries the N6-carboxylysine modification. Cysteine 214 lines the [2Fe-2S] cluster pocket. Glutamate 465 is a Mg(2+) binding site. Residue serine 491 is the Proton acceptor of the active site.

It belongs to the IlvD/Edd family. As to quaternary structure, homodimer. It depends on [2Fe-2S] cluster as a cofactor. Requires Mg(2+) as cofactor.

The enzyme catalyses (2R)-2,3-dihydroxy-3-methylbutanoate = 3-methyl-2-oxobutanoate + H2O. The catalysed reaction is (2R,3R)-2,3-dihydroxy-3-methylpentanoate = (S)-3-methyl-2-oxopentanoate + H2O. It functions in the pathway amino-acid biosynthesis; L-isoleucine biosynthesis; L-isoleucine from 2-oxobutanoate: step 3/4. Its pathway is amino-acid biosynthesis; L-valine biosynthesis; L-valine from pyruvate: step 3/4. In terms of biological role, functions in the biosynthesis of branched-chain amino acids. Catalyzes the dehydration of (2R,3R)-2,3-dihydroxy-3-methylpentanoate (2,3-dihydroxy-3-methylvalerate) into 2-oxo-3-methylpentanoate (2-oxo-3-methylvalerate) and of (2R)-2,3-dihydroxy-3-methylbutanoate (2,3-dihydroxyisovalerate) into 2-oxo-3-methylbutanoate (2-oxoisovalerate), the penultimate precursor to L-isoleucine and L-valine, respectively. In Mycolicibacterium paratuberculosis (strain ATCC BAA-968 / K-10) (Mycobacterium paratuberculosis), this protein is Dihydroxy-acid dehydratase.